Reading from the N-terminus, the 302-residue chain is Tegument protein VP22 (302 aa).

Positions 1–10 are enriched in basic and acidic residues; sequence MASSDGDRLC. 2 disordered regions span residues 1–42 and 125–170; these read MASS…PDDS and SFTK…SSWC. Residues 154 to 244 form an interaction with gE region; that stretch reads RPISFSTAPK…ANEADLGEGA (91 aa). Residues 157–170 show a composition bias toward polar residues; sequence SFSTAPKTATSSWC. The Nuclear export signal signature appears at 212-224; it reads LDRLLTGAVIRIT. The tract at residues 243–302 is disordered; it reads GASVSKRGHNRKTGDLQGGMGNEPMYAQVRKPKSRTDTQTTGRITNRSRARSASRTDTRK.

Belongs to the alphaherpesvirinae VP22 tegument protein family. In terms of assembly, interacts with gE (via C-terminus); this interaction is necessary for the recruitment of VP22/ORF9 to the Golgi and its packaging into virions. Interacts with gM (via C-terminus). Interacts with VP16/ORF10; this interaction allows the formation of a tripartite complex composed of VP16/ORF10, VP22/ORF9 and VHS/ORF17. Interacts with the capsid-binding protein ORF44. Interacts with host CGAS. In terms of processing, highly phosphorylated in the host cell. Packaging is selective for underphosphorylated forms.

Its subcellular location is the virion tegument. It localises to the host cytoplasm. It is found in the host nucleus. The protein localises to the host Golgi apparatus. Functionally, tegument protein that plays different roles during the time course of infection. Participates in both the accumulation of viral mRNAs and viral protein translation at late time of infection. Modulates the RNase activity of the virion host shutoff protein ORF17 probably to ensure necessary levels of key cellular mRNAs and proteins. Plays a role in microtubule reorganization that occurs after viral infection by stabilizing microtubule network. Plays a role in the inhibition of host innate immune system by targeting the CGAS enzymatic activity which is the principal cytosolic DNA sensor that detects invading viral DNA. Acts by mediating disruption of liquid-like droplets in which CGAS is activated, thereby preventing CGAS activity. In Homo sapiens (Human), this protein is Tegument protein VP22.